A 90-amino-acid chain; its full sequence is UPF0367 protein PMT9312_0127 (90 aa).

This sequence belongs to the UPF0367 family.

The polypeptide is UPF0367 protein PMT9312_0127 (Prochlorococcus marinus (strain MIT 9312)).